The chain runs to 611 residues: Alpha-1,2-mannosyltransferase ALG9 (611 aa).

Residues 1 to 10 (MASRGARQRL) are compositionally biased toward basic residues. The tract at residues 1–23 (MASRGARQRLKGSGASSGDTAPA) is disordered. Topologically, residues 1–135 (MASRGARQRL…FHARILQTNK (135 aa)) are lumenal. Residue Asn-77 is glycosylated (N-linked (GlcNAc...) asparagine). The helical transmembrane segment at 136-156 (ILVFYFLRCLLAFVSCICELY) threads the bilayer. Residues 157-171 (FYKAVCKKFGLHVSR) are Cytoplasmic-facing. The chain crosses the membrane as a helical span at residues 172–192 (MMLAFLVLSTGMFCSSSAFLP). At 193-213 (SSFCMYTTLIAMTGWYMDKTS) the chain is on the lumenal side. The chain crosses the membrane as a helical span at residues 214 to 234 (IAVLGVAAGAILGWPFSAALG). The Cytoplasmic portion of the chain corresponds to 235 to 249 (LPIAFDLLVMKHRWK). A helical transmembrane segment spans residues 250-270 (SFFHWSLMALILFLVPVVVID). Residues 271-304 (SYYYGKLVIAPLNIVLYNVFTPHGPDLYGTEPWY) lie on the Lumenal side of the membrane. A helical membrane pass occupies residues 305–325 (FYLINGFLNFNVAFALALLVL). The Cytoplasmic segment spans residues 326-342 (PLTSLMEYLLQRFHVQN). A helical transmembrane segment spans residues 343-363 (LGHPYWLTLAPMYIWFIIFFI). Over 364-370 (QPHKEER) the chain is Lumenal. A helical transmembrane segment spans residues 371–391 (FLFPVYPLICLCGAVALSALQ). Residues 392–405 (KCYHFVFQRYRLEH) are Cytoplasmic-facing. The chain crosses the membrane as a helical span at residues 406 to 426 (YTVTSNWLALGTVFLFGLLSF). Residues 427 to 611 (SRSVALFRGY…AKQIRKKSGG (185 aa)) are Lumenal-facing. N-linked (GlcNAc...) asparagine glycosylation is present at Asn-593.

Belongs to the glycosyltransferase 22 family. In terms of tissue distribution, ubiquitously expressed; with highest levels in heart, liver and pancreas.

Its subcellular location is the endoplasmic reticulum membrane. The enzyme catalyses an alpha-D-Man-(1-&gt;2)-alpha-D-Man-(1-&gt;2)-alpha-D-Man-(1-&gt;3)-[alpha-D-Man-(1-&gt;3)-alpha-D-Man-(1-&gt;6)]-beta-D-Man-(1-&gt;4)-beta-D-GlcNAc-(1-&gt;4)-alpha-D-GlcNAc-diphospho-di-trans,poly-cis-dolichol + a di-trans,poly-cis-dolichyl beta-D-mannosyl phosphate = an alpha-D-Man-(1-&gt;2)-alpha-D-Man-(1-&gt;2)-alpha-D-Man-(1-&gt;3)-[alpha-D-Man-(1-&gt;2)-alpha-D-Man-(1-&gt;3)-alpha-D-Man-(1-&gt;6)]-beta-D-Man-(1-&gt;4)-beta-D-GlcNAc-(1-&gt;4)-alpha-D-GlcNAc-diphospho-di-trans,poly-cis-dolichol + a di-trans,poly-cis-dolichyl phosphate + H(+). The catalysed reaction is an alpha-D-Man-(1-&gt;2)-alpha-D-Man-(1-&gt;2)-alpha-D-Man-(1-&gt;3)-[alpha-D-Man-(1-&gt;2)-alpha-D-Man-(1-&gt;3)-[alpha-D-Man-(1-&gt;6)]-alpha-D-Man-(1-&gt;6)]-beta-D-Man-(1-&gt;4)-beta-D-GlcNAc-(1-&gt;4)-alpha-D-GlcNAc-diphospho-di-trans,poly-cis-dolichol + a di-trans,poly-cis-dolichyl beta-D-mannosyl phosphate = an alpha-D-Man-(1-&gt;2)-alpha-D-Man-(1-&gt;2)-alpha-D-Man-(1-&gt;3)-[alpha-D-Man-(1-&gt;2)-alpha-D-Man-(1-&gt;3)-[alpha-D-Man-(1-&gt;2)-alpha-D-Man-(1-&gt;6)]-alpha-D-Man-(1-&gt;6)]-beta-D-Man-(1-&gt;4)-beta-D-GlcNAc-(1-&gt;4)-alpha-D-GlcNAc-diphospho-di-trans,poly-cis-dolichol + a di-trans,poly-cis-dolichyl phosphate + H(+). It functions in the pathway protein modification; protein glycosylation. Functionally, mannosyltransferase that operates in the biosynthetic pathway of dolichol-linked oligosaccharides, the glycan precursors employed in protein asparagine (N)-glycosylation. The assembly of dolichol-linked oligosaccharides begins on the cytosolic side of the endoplasmic reticulum membrane and finishes in its lumen. The sequential addition of sugars to dolichol pyrophosphate produces dolichol-linked oligosaccharides containing fourteen sugars, including two GlcNAcs, nine mannoses and three glucoses. Once assembled, the oligosaccharide is transferred from the lipid to nascent proteins by oligosaccharyltransferases. In the lumen of the endoplasmic reticulum, catalyzes the addition of the seventh and ninth alpha-1,2-linked mannose residues to Man(6)GlcNAc(2)-PP-dolichol and Man(8)GlcNAc(2)-PP-dolichol respectively. In Homo sapiens (Human), this protein is Alpha-1,2-mannosyltransferase ALG9.